The primary structure comprises 843 residues: Probable inorganic carbon transporter subunit DabA 2 (843 aa).

Zn(2+) contacts are provided by cysteine 352, aspartate 354, histidine 536, and cysteine 551.

The protein belongs to the inorganic carbon transporter (TC 9.A.2) DabA family. Forms a complex with DabB. Zn(2+) is required as a cofactor.

The protein localises to the cell inner membrane. Part of an energy-coupled inorganic carbon pump. In Bradyrhizobium sp. (strain BTAi1 / ATCC BAA-1182), this protein is Probable inorganic carbon transporter subunit DabA 2.